Here is a 173-residue protein sequence, read N- to C-terminus: Calcineurin subunit B (173 aa).

4 EF-hand domains span residues 20 to 55 (DEIDRLRKRFMKLDTDASGILETNEFLSLPGVAANP), 59 to 87 (RLMDVFDENHSGDVDFQEFINGLSTFSTK), 89 to 124 (NKKEKLRFAFKVYDIDRDGYISNGELFIVLKMMVGN), and 130 to 165 (QLQQIVDKTIMEADKDGDGKISFEEFEAQVGGTNVY). Ca(2+) is bound by residues aspartate 33, aspartate 35, serine 37, glutamate 44, aspartate 65, asparagine 67, serine 69, aspartate 71, glutamate 76, aspartate 102, aspartate 104, aspartate 106, tyrosine 108, glutamate 113, aspartate 143, aspartate 145, aspartate 147, lysine 149, and glutamate 154.

The protein belongs to the calcineurin regulatory subunit family. As to quaternary structure, composed of a catalytic subunit (A) and a regulatory subunit (B).

In terms of biological role, regulatory subunit of calcineurin, a calcium-dependent, calmodulin stimulated protein phosphatase. Confers calcium sensitivity. This chain is Calcineurin subunit B (CNB1), found in Yarrowia lipolytica (strain CLIB 122 / E 150) (Yeast).